We begin with the raw amino-acid sequence, 240 residues long: tRNA1(Val) (adenine(37)-N6)-methyltransferase (240 aa).

Belongs to the methyltransferase superfamily. tRNA (adenine-N(6)-)-methyltransferase family.

It localises to the cytoplasm. It carries out the reaction adenosine(37) in tRNA1(Val) + S-adenosyl-L-methionine = N(6)-methyladenosine(37) in tRNA1(Val) + S-adenosyl-L-homocysteine + H(+). Functionally, specifically methylates the adenine in position 37 of tRNA(1)(Val) (anticodon cmo5UAC). This Vibrio cholerae serotype O1 (strain ATCC 39315 / El Tor Inaba N16961) protein is tRNA1(Val) (adenine(37)-N6)-methyltransferase.